A 211-amino-acid chain; its full sequence is Uridine kinase (211 aa).

12 to 19 (GGSGGGKT) is an ATP binding site.

It belongs to the uridine kinase family.

It is found in the cytoplasm. The catalysed reaction is uridine + ATP = UMP + ADP + H(+). The enzyme catalyses cytidine + ATP = CMP + ADP + H(+). It participates in pyrimidine metabolism; CTP biosynthesis via salvage pathway; CTP from cytidine: step 1/3. Its pathway is pyrimidine metabolism; UMP biosynthesis via salvage pathway; UMP from uridine: step 1/1. The chain is Uridine kinase from Streptococcus thermophilus (strain CNRZ 1066).